A 274-amino-acid chain; its full sequence is 2,3,4,5-tetrahydropyridine-2,6-dicarboxylate N-succinyltransferase (274 aa).

Residues arginine 106 and aspartate 143 each contribute to the substrate site.

Belongs to the transferase hexapeptide repeat family. Homotrimer.

The protein localises to the cytoplasm. It catalyses the reaction (S)-2,3,4,5-tetrahydrodipicolinate + succinyl-CoA + H2O = (S)-2-succinylamino-6-oxoheptanedioate + CoA. The protein operates within amino-acid biosynthesis; L-lysine biosynthesis via DAP pathway; LL-2,6-diaminopimelate from (S)-tetrahydrodipicolinate (succinylase route): step 1/3. This is 2,3,4,5-tetrahydropyridine-2,6-dicarboxylate N-succinyltransferase from Rickettsia typhi (strain ATCC VR-144 / Wilmington).